A 289-amino-acid polypeptide reads, in one-letter code: T-cell ecto-ADP-ribosyltransferase 2 (289 aa).

The first 20 residues, 1–20, serve as a signal peptide directing secretion; sequence MTSKIFKFFLTWWLTQQVTG. 2 disulfide bridges follow: C41–C246 and C141–C193. In terms of domain architecture, TR mART core spans 61–241; it reads EELKLEWEKA…IFLDSPERKK (181 aa). A glycan (N-linked (GlcNAc...) asparagine) is linked at N79. NAD(+)-binding residues include Y98, R146, and Q164. R146 is an active-site residue. The active site involves S167. S202 is a binding site for NAD(+). The active site involves E209. The N-linked (GlcNAc...) asparagine glycan is linked to N249. The GPI-anchor amidated serine moiety is linked to residue S260. A propeptide spans 261 to 289 (removed in mature form); sequence ISGSRESCVSLFLVVLLGLLVQQLTLAEL.

The protein belongs to the Arg-specific ADP-ribosyltransferase family. In terms of tissue distribution, expressed in spleen, intestine and thymus.

It is found in the cell membrane. It carries out the reaction L-arginyl-[protein] + NAD(+) = N(omega)-(ADP-D-ribosyl)-L-arginyl-[protein] + nicotinamide + H(+). The catalysed reaction is NAD(+) + H2O = ADP-D-ribose + nicotinamide + H(+). Its function is as follows. Has both NAD(+) glycohydrolase and ADP-ribosyltransferase activity. In Mus musculus (Mouse), this protein is T-cell ecto-ADP-ribosyltransferase 2 (Art2b).